We begin with the raw amino-acid sequence, 80 residues long: RNA-binding protein Hfq (80 aa).

The 61-residue stretch at E7 to L67 folds into the Sm domain.

Belongs to the Hfq family. Homohexamer.

Its function is as follows. RNA chaperone that binds small regulatory RNA (sRNAs) and mRNAs to facilitate mRNA translational regulation in response to envelope stress, environmental stress and changes in metabolite concentrations. Also binds with high specificity to tRNAs. This Aquifex aeolicus (strain VF5) protein is RNA-binding protein Hfq.